Here is a 1136-residue protein sequence, read N- to C-terminus: Probable RNA-dependent RNA polymerase 2 (1136 aa).

A disordered region spans residues 965 to 989; it reads SGDSGALSSSSAQPSPTYDPDLEVP. Residues 967–980 show a composition bias toward low complexity; it reads DSGALSSSSAQPSP.

It belongs to the RdRP family.

It carries out the reaction RNA(n) + a ribonucleoside 5'-triphosphate = RNA(n+1) + diphosphate. Probably involved in the RNA silencing pathway and required for the generation of small interfering RNAs (siRNAs). The sequence is that of Probable RNA-dependent RNA polymerase 2 (RDR2) from Oryza sativa subsp. japonica (Rice).